The primary structure comprises 151 residues: Transcriptional regulator MraZ (151 aa).

2 SpoVT-AbrB domains span residues 5–52 (ANAV…PLDE) and 81–124 (AVDL…DEDA).

This sequence belongs to the MraZ family. In terms of assembly, forms oligomers.

The protein resides in the cytoplasm. The protein localises to the nucleoid. In Pseudomonas putida (strain W619), this protein is Transcriptional regulator MraZ.